An 800-amino-acid chain; its full sequence is Phenylalanine--tRNA ligase beta subunit (800 aa).

The 116-residue stretch at 39–154 (TKDIKNLVVG…ESQVPGTDAL (116 aa)) folds into the tRNA-binding domain. The region spanning 408-483 (AFITPIDITA…RIYGYDDIPS (76 aa)) is the B5 domain. Mg(2+)-binding residues include Asp461, Asp467, Glu470, and Glu471. An FDX-ACB domain is found at 708–800 (PIFPGMSRDI…ALIEQGAVIR (93 aa)).

This sequence belongs to the phenylalanyl-tRNA synthetase beta subunit family. Type 1 subfamily. Tetramer of two alpha and two beta subunits. It depends on Mg(2+) as a cofactor.

The protein localises to the cytoplasm. The enzyme catalyses tRNA(Phe) + L-phenylalanine + ATP = L-phenylalanyl-tRNA(Phe) + AMP + diphosphate + H(+). The sequence is that of Phenylalanine--tRNA ligase beta subunit from Staphylococcus aureus (strain bovine RF122 / ET3-1).